The sequence spans 292 residues: MKILVPATSANLGPGFDCLGLSLKYFNQTIVEKSKFFSISIHGEGENNIYLKKNNSFVNIFYEIYQRLSGKKDNFRFVFQNNIPLARGMGSSSAVIIGAIACAYELSGFKADKNTILNEALKYENHPDNIAPAALGGFVCALTHNEKVLAIKKEVDKDLQAVITIPNVAMNTQKSRAVLAKKINLEDGVFNLCHASFLTACFLEKKYDLLKYASLDKLHQNQRMKLLPELFEVQKLALDNNALMSTLSGSGSSFFTLAYKDDAKKIKEKIKNKFAKFRVELLEFDDEGFKIC.

84–94 (PLARGMGSSSA) lines the ATP pocket.

The protein belongs to the GHMP kinase family. Homoserine kinase subfamily.

Its subcellular location is the cytoplasm. The enzyme catalyses L-homoserine + ATP = O-phospho-L-homoserine + ADP + H(+). It functions in the pathway amino-acid biosynthesis; L-threonine biosynthesis; L-threonine from L-aspartate: step 4/5. Its function is as follows. Catalyzes the ATP-dependent phosphorylation of L-homoserine to L-homoserine phosphate. This chain is Homoserine kinase, found in Campylobacter lari (strain RM2100 / D67 / ATCC BAA-1060).